The primary structure comprises 99 residues: Large ribosomal subunit protein eL21 (99 aa).

This sequence belongs to the eukaryotic ribosomal protein eL21 family.

The polypeptide is Large ribosomal subunit protein eL21 (Methanocella arvoryzae (strain DSM 22066 / NBRC 105507 / MRE50)).